The primary structure comprises 84 residues: Small ribosomal subunit protein uS17 (84 aa).

This sequence belongs to the universal ribosomal protein uS17 family. Part of the 30S ribosomal subunit.

Functionally, one of the primary rRNA binding proteins, it binds specifically to the 5'-end of 16S ribosomal RNA. This is Small ribosomal subunit protein uS17 from Thermoanaerobacter pseudethanolicus (strain ATCC 33223 / 39E) (Clostridium thermohydrosulfuricum).